We begin with the raw amino-acid sequence, 171 residues long: Adenine phosphoribosyltransferase (171 aa).

This sequence belongs to the purine/pyrimidine phosphoribosyltransferase family. Homodimer.

It is found in the cytoplasm. The catalysed reaction is AMP + diphosphate = 5-phospho-alpha-D-ribose 1-diphosphate + adenine. The protein operates within purine metabolism; AMP biosynthesis via salvage pathway; AMP from adenine: step 1/1. Its function is as follows. Catalyzes a salvage reaction resulting in the formation of AMP, that is energically less costly than de novo synthesis. The sequence is that of Adenine phosphoribosyltransferase from Methylococcus capsulatus (strain ATCC 33009 / NCIMB 11132 / Bath).